Consider the following 548-residue polypeptide: CTP synthase (548 aa).

The interval 1 to 266 (MRVNYIFVTG…DNYICKRFNL (266 aa)) is amidoligase domain. CTP is bound at residue Ser14. Position 14 (Ser14) interacts with UTP. ATP-binding positions include 15–20 (SLGKGI) and Asp72. Mg(2+) is bound by residues Asp72 and Glu140. CTP contacts are provided by residues 147-149 (DIE), 187-192 (KTKPTQ), and Lys223. Residues 187–192 (KTKPTQ) and Lys223 contribute to the UTP site. In terms of domain architecture, Glutamine amidotransferase type-1 spans 291–543 (TVGMVGKYIE…IKAAIEYQHR (253 aa)). An L-glutamine-binding site is contributed by Gly353. Cys380 functions as the Nucleophile; for glutamine hydrolysis in the catalytic mechanism. L-glutamine contacts are provided by residues 381-384 (LGMQ), Glu404, and Arg471. Active-site residues include His516 and Glu518.

The protein belongs to the CTP synthase family. In terms of assembly, homotetramer.

It catalyses the reaction UTP + L-glutamine + ATP + H2O = CTP + L-glutamate + ADP + phosphate + 2 H(+). It carries out the reaction L-glutamine + H2O = L-glutamate + NH4(+). The enzyme catalyses UTP + NH4(+) + ATP = CTP + ADP + phosphate + 2 H(+). It participates in pyrimidine metabolism; CTP biosynthesis via de novo pathway; CTP from UDP: step 2/2. Allosterically activated by GTP, when glutamine is the substrate; GTP has no effect on the reaction when ammonia is the substrate. The allosteric effector GTP functions by stabilizing the protein conformation that binds the tetrahedral intermediate(s) formed during glutamine hydrolysis. Inhibited by the product CTP, via allosteric rather than competitive inhibition. Catalyzes the ATP-dependent amination of UTP to CTP with either L-glutamine or ammonia as the source of nitrogen. Regulates intracellular CTP levels through interactions with the four ribonucleotide triphosphates. The polypeptide is CTP synthase (Blochmanniella pennsylvanica (strain BPEN)).